Here is a 61-residue protein sequence, read N- to C-terminus: Cytotoxin 2 (61 aa).

4 cysteine pairs are disulfide-bonded: Cys3–Cys22, Cys15–Cys39, Cys43–Cys54, and Cys55–Cys60.

This sequence belongs to the three-finger toxin family. Short-chain subfamily. Type IB cytotoxin sub-subfamily. Expressed by the venom gland.

Its subcellular location is the secreted. Functionally, this protein lyses red blood cells, has cytotoxic activity and induces hypotension, but is not neurotoxic. In addition, it induces direct paralysis of the muscle fiber. The polypeptide is Cytotoxin 2 (Hemachatus haemachatus (Rinkhals)).